The sequence spans 158 residues: Large ribosomal subunit protein uL16 (158 aa).

It belongs to the universal ribosomal protein uL16 family. In terms of assembly, part of the 50S ribosomal subunit.

Its function is as follows. Binds 23S rRNA and is also seen to make contacts with the A and possibly P site tRNAs. In Synechococcus sp. (strain CC9902), this protein is Large ribosomal subunit protein uL16.